The primary structure comprises 362 residues: Variable large protein 25 (362 aa).

The signal sequence occupies residues 1 to 26; it reads MRKRISAIINKLNISIMMMIVVLMIG. Cys-27 carries N-palmitoyl cysteine lipidation. A lipid anchor (S-diacylglycerol cysteine) is attached at Cys-27.

Belongs to the variable large protein (Vlp) family. Alpha subfamily.

It is found in the cell outer membrane. The Vlp and Vsp proteins are antigenically distinct proteins, only one vlp or vsp gene is transcriptionally active at any one time. Switching between these genes is a mechanism of host immune response evasion. The polypeptide is Variable large protein 25 (Borrelia hermsii).